The chain runs to 97 residues: Small ribosomal subunit protein bS20 (97 aa).

This sequence belongs to the bacterial ribosomal protein bS20 family.

Its function is as follows. Binds directly to 16S ribosomal RNA. This is Small ribosomal subunit protein bS20 from Prochlorococcus marinus (strain MIT 9301).